The chain runs to 407 residues: Arginine biosynthesis bifunctional protein ArgJ (407 aa).

Positions 155, 181, 192, 278, 402, and 407 each coordinate substrate. Threonine 192 acts as the Nucleophile in catalysis.

This sequence belongs to the ArgJ family. In terms of assembly, heterotetramer of two alpha and two beta chains.

The protein localises to the cytoplasm. The enzyme catalyses N(2)-acetyl-L-ornithine + L-glutamate = N-acetyl-L-glutamate + L-ornithine. It carries out the reaction L-glutamate + acetyl-CoA = N-acetyl-L-glutamate + CoA + H(+). It participates in amino-acid biosynthesis; L-arginine biosynthesis; L-ornithine and N-acetyl-L-glutamate from L-glutamate and N(2)-acetyl-L-ornithine (cyclic): step 1/1. Its pathway is amino-acid biosynthesis; L-arginine biosynthesis; N(2)-acetyl-L-ornithine from L-glutamate: step 1/4. Its function is as follows. Catalyzes two activities which are involved in the cyclic version of arginine biosynthesis: the synthesis of N-acetylglutamate from glutamate and acetyl-CoA as the acetyl donor, and of ornithine by transacetylation between N(2)-acetylornithine and glutamate. The chain is Arginine biosynthesis bifunctional protein ArgJ from Thiobacillus denitrificans (strain ATCC 25259 / T1).